Here is a 250-residue protein sequence, read N- to C-terminus: Bacteriorhodopsin-II (250 aa).

Transmembrane regions (helical) follow at residues 14–34, 49–69, 89–109, 114–134, 142–162, 183–203, and 210–230; these read EGIW…YFMA, VITI…FFGF, YADW…LAGA, MASL…ATLM, AFWT…VVVV, IILV…EGLG, and ETLL…FILL. N6-(retinylidene)lysine is present on lysine 222.

This sequence belongs to the archaeal/bacterial/fungal opsin family. Post-translationally, the covalent binding of retinal to the apoprotein, bacterioopsin, generates bacteriorhodopsin.

It is found in the membrane. In terms of biological role, light-driven proton pump. The protein is Bacteriorhodopsin-II (xop1) of Haloarcula marismortui (strain ATCC 43049 / DSM 3752 / JCM 8966 / VKM B-1809) (Halobacterium marismortui).